The primary structure comprises 152 residues: MFP1 attachment factor 1 (152 aa).

Disordered regions lie at residues 1–33 (MAEI…PPTQ) and 107–152 (DTVK…ETEP). The tract at residues 12–115 (TVTQETQNKP…IDTVKSRSAP (104 aa)) is WPP. Positions 134-152 (EPSSASGLTGEVSSVETEP) are enriched in polar residues.

Interacts with WAP through its WPP domain. Binds to MFP1 and FPP proteins. Expressed in young tomato leaves, young fruits, and flowers (at protein level).

Its subcellular location is the nucleus envelope. It is found in the cytoplasm. The protein localises to the golgi apparatus. It localises to the nucleus. The protein resides in the nucleus matrix. This Solanum lycopersicum (Tomato) protein is MFP1 attachment factor 1 (MAF1).